The chain runs to 268 residues: AN1-type zinc finger protein 1 (268 aa).

Alanine 2 is subject to N-acetylalanine. AN1-type zinc fingers lie at residues 4–52 (LDIG…VVKE) and 58–106 (EHKS…VAKP). 16 residues coordinate Zn(2+): cysteine 10, cysteine 15, cysteine 25, cysteine 28, cysteine 33, histidine 36, histidine 42, cysteine 44, cysteine 64, cysteine 69, cysteine 79, cysteine 82, cysteine 87, histidine 90, histidine 96, and cysteine 98. Residues 160 to 260 (QTERTYFQVY…EYLNDEEQFL (101 aa)) form a ubiquitin-like region.

Associates with the 26S proteasome; this association occurs upon exposure to arsenite and is reduced in the presence of ATP. Interacts (via AN1-type 1 and 2 zinc fingers) with PSMD1; this interaction is increased upon arsenite treatment and occurs in an ATP-independent manner. Interacts with PSMC4. Interacts with PSMA1. Interacts (via its ubiquitin-like region) with VCP; this interaction occurs in an arsenite-dependent manner and is necessary for the recruitment of the ubiquitin-selective ATPase VCP to stress granules (SGs).

The protein resides in the cytoplasm. Its subcellular location is the stress granule. In terms of biological role, plays a role in the regulation of cytoplasmic stress granules (SGs) turnover. SGs are dynamic and transient cytoplasmic ribonucleoprotein assemblies important for cellular protein homeostasis when protein production is suspended after acute exogenous stress. Associates with SGs and is involved in the efficient and specific arsenite-induced clearance process of SGs through the recruitment of the ubiquitin-selective ATPase VCP and the 26S proteasome. This process requires both complexes for efficient degradation of damaged ubiquitinated SG proteins during recovery from arsenite stress, and hence avoiding aberrant cytoplasmic SGs degradation via autophagy. This Mus musculus (Mouse) protein is AN1-type zinc finger protein 1.